Consider the following 379-residue polypeptide: Putative zinc metalloprotease BMEI0829 (379 aa).

Position 33 (H33) interacts with Zn(2+). The active site involves E34. H37 is a binding site for Zn(2+). 4 helical membrane passes run 39 to 61 (LVAR…ELLG), 122 to 144 (VFAG…FALY), 305 to 327 (FDWL…LFPL), and 355 to 377 (IFYR…NDLF). The 76-residue stretch at 133 to 208 (TIAIFSVFFA…LNFTVERDGK (76 aa)) folds into the PDZ domain.

The protein belongs to the peptidase M50B family. Requires Zn(2+) as cofactor.

The protein localises to the cell inner membrane. This is Putative zinc metalloprotease BMEI0829 from Brucella melitensis biotype 1 (strain ATCC 23456 / CCUG 17765 / NCTC 10094 / 16M).